Consider the following 161-residue polypeptide: METSQKYHTCGSTLVQTIDAPLSLVWSILRRFDNPQAYKQFVKTCNLSSGDGGEGSVREVTVVSGLPAEFSRERLDELDDESHVMMISIIGGDHRLVNYRSKTMAFVAADTEEKTVVVESYVVDVPEGNSEEETTSFADTIVGFNLKSLAKLSERVAHLKL.

The segment at 3 to 154 (TSQKYHTCGS…NLKSLAKLSE (152 aa)) is START-like. Abscisate is bound by residues K39, 68–73 (AEFSRE), 95–101 (RLVNYRS), and E119. The short motif at 64-68 (SGLPA) is the Gate loop element. The Latch loop signature appears at 94–96 (HRL).

The protein belongs to the PYR/PYL/RCAR abscisic acid intracellular receptor family. In terms of assembly, homodimer. Binds ABA on one subunit only. Interacts with PP2Cs. Binds to CARs protein in an ABA-independent manner, both at the plasma membrane and in the nucleus. Interacts with I-2 and TOPP1.

Its subcellular location is the cytoplasm. It localises to the nucleus. The protein localises to the cell membrane. Functionally, receptor for abscisic acid (ABA) required for ABA-mediated responses such as stomatal closure and germination inhibition. Inhibits the activity of group-A protein phosphatases type 2C (PP2Cs) when activated by ABA. Suppresses the phosphatase activity of TOPP1 in a dose-dependent manner in vitro. In Arabidopsis thaliana (Mouse-ear cress), this protein is Abscisic acid receptor PYL11 (PYL11).